The following is a 427-amino-acid chain: DEAD-box ATP-dependent RNA helicase 56 (427 aa).

The segment at 1–30 is disordered; the sequence is MGDARDNEAYEEELLDYEEEDEKVPDSGNK. Positions 9-23 are enriched in acidic residues; it reads AYEEELLDYEEEDEK. Positions 46 to 74 match the Q motif motif; the sequence is SGFRDFLLKPELLRAIVDSGFEHPSEVQH. The 174-residue stretch at 77–250 folds into the Helicase ATP-binding domain; the sequence is IPQAILGMDV…KKFMQDPMEI (174 aa). 90–97 contacts ATP; that stretch reads AKSGMGKT. The DECD box signature appears at 197 to 200; sequence DECD. Residues 278 to 423 enclose the Helicase C-terminal domain; that stretch reads KLNDLLDALD…ELPEQIDTST (146 aa).

The protein belongs to the DEAD box helicase family. DECD subfamily. As to quaternary structure, interacts with ALY2 and MOS11.

The protein resides in the nucleus. The catalysed reaction is ATP + H2O = ADP + phosphate + H(+). ATP-dependent RNA helicase involved in pre-mRNA splicing. Required for the export of mRNA out of the nucleus. In addition to ssRNA and dsRNA, binds dsDNA, but not ssDNA. The chain is DEAD-box ATP-dependent RNA helicase 56 (RH56) from Arabidopsis thaliana (Mouse-ear cress).